The following is a 277-amino-acid chain: MYINFPNINPIIFSIGSFKAHWYGFMYLISFMFAVWYGKKSVEKKNQIKINIENLLYIIFISSCIGGRIGYIIFYNFSYFSQNILCSLHIWEGGMSFHGGLIGAIIAMYYLSLKQNVKILKISDFIVPLVPFGLGAGRLGNFINSELFGRIAPNFPYAFLFPNTYKEDLKIVSKNPELQDILDKYGVLPRHPSQLYEFFLEGIFLFFIIYFFTRKKRNTGSISALFLISYGILRIISEFFREPDPQIGLLKNIITMGQILSIPMIIIGVLYVNLFIK.

Helical transmembrane passes span 11-31 (IIFSIGSFKAHWYGFMYLISF), 55-75 (LLYIIFISSCIGGRIGYIIFY), 93-113 (GGMSFHGGLIGAIIAMYYLSL), and 117-137 (VKILKISDFIVPLVPFGLGAG). Arginine 138 lines the a 1,2-diacyl-sn-glycero-3-phospho-(1'-sn-glycerol) pocket. The next 3 helical transmembrane spans lie at 192-212 (PSQLYEFFLEGIFLFFIIYFF), 220-240 (GSISALFLISYGILRIISEFF), and 256-276 (MGQILSIPMIIIGVLYVNLFI).

This sequence belongs to the Lgt family.

It is found in the cell inner membrane. It carries out the reaction L-cysteinyl-[prolipoprotein] + a 1,2-diacyl-sn-glycero-3-phospho-(1'-sn-glycerol) = an S-1,2-diacyl-sn-glyceryl-L-cysteinyl-[prolipoprotein] + sn-glycerol 1-phosphate + H(+). It participates in protein modification; lipoprotein biosynthesis (diacylglyceryl transfer). Its function is as follows. Catalyzes the transfer of the diacylglyceryl group from phosphatidylglycerol to the sulfhydryl group of the N-terminal cysteine of a prolipoprotein, the first step in the formation of mature lipoproteins. The protein is Phosphatidylglycerol--prolipoprotein diacylglyceryl transferase of Buchnera aphidicola subsp. Schizaphis graminum (strain Sg).